The chain runs to 213 residues: Orotate phosphoribosyltransferase (213 aa).

K26 is a 5-phospho-alpha-D-ribose 1-diphosphate binding site. 34–35 (FF) lines the orotate pocket. Residues 72–73 (YK), R99, K100, K103, H105, and 124–132 (DDVITAGTA) each bind 5-phospho-alpha-D-ribose 1-diphosphate. Orotate is bound by residues T128 and R156.

This sequence belongs to the purine/pyrimidine phosphoribosyltransferase family. PyrE subfamily. As to quaternary structure, homodimer. Requires Mg(2+) as cofactor.

It catalyses the reaction orotidine 5'-phosphate + diphosphate = orotate + 5-phospho-alpha-D-ribose 1-diphosphate. The protein operates within pyrimidine metabolism; UMP biosynthesis via de novo pathway; UMP from orotate: step 1/2. Catalyzes the transfer of a ribosyl phosphate group from 5-phosphoribose 1-diphosphate to orotate, leading to the formation of orotidine monophosphate (OMP). The protein is Orotate phosphoribosyltransferase of Vibrio atlanticus (strain LGP32) (Vibrio splendidus (strain Mel32)).